A 725-amino-acid polypeptide reads, in one-letter code: Ribosomal RNA large subunit methyltransferase K/L (725 aa).

Residues 46–157 form the THUMP domain; that stretch reads VAYRLCLWSR…RGQATLSLDL (112 aa). The segment at 393-412 is disordered; the sequence is TGERGERNDDGQARAPSEPA. Basic and acidic residues predominate over residues 395–404; sequence ERGERNDDGQ.

This sequence belongs to the methyltransferase superfamily. RlmKL family.

It localises to the cytoplasm. It carries out the reaction guanosine(2445) in 23S rRNA + S-adenosyl-L-methionine = N(2)-methylguanosine(2445) in 23S rRNA + S-adenosyl-L-homocysteine + H(+). The catalysed reaction is guanosine(2069) in 23S rRNA + S-adenosyl-L-methionine = N(2)-methylguanosine(2069) in 23S rRNA + S-adenosyl-L-homocysteine + H(+). Functionally, specifically methylates the guanine in position 2445 (m2G2445) and the guanine in position 2069 (m7G2069) of 23S rRNA. This Pseudomonas paraeruginosa (strain DSM 24068 / PA7) (Pseudomonas aeruginosa (strain PA7)) protein is Ribosomal RNA large subunit methyltransferase K/L.